An 87-amino-acid chain; its full sequence is Phosphocarrier protein HPr (87 aa).

Residues 1 to 87 (MEKIFKVTSD…ETMKNEGLGE (87 aa)) enclose the HPr domain. H14 acts as the Pros-phosphohistidine intermediate; alternate in catalysis. Residue H14 is modified to Tele-phosphohistidine; alternate. Residue S45 is modified to Phosphoserine; by HPrK/P.

The protein belongs to the HPr family. The form phosphorylated at the tele nitrogen (N(epsilon)2), instead of the expected pros nitrogen (N(delta)1), of His-14 is not able to transfer its phosphoryl group to the B.subtilis EIIA-Glc domain. This form may be inactive in PTS-catalyzed sugar transport or target an as yet unknown acceptor molecule in an alternative metabolic process.

The protein resides in the cytoplasm. Phosphorylation on Ser-45 inhibits the phosphoryl transfer from enzyme I to HPr. Its function is as follows. General (non sugar-specific) component of the phosphoenolpyruvate-dependent sugar phosphotransferase system (sugar PTS). This major carbohydrate active-transport system catalyzes the phosphorylation of incoming sugar substrates concomitantly with their translocation across the cell membrane. The phosphoryl group from phosphoenolpyruvate (PEP) is transferred to the phosphoryl carrier protein HPr by enzyme I. Phospho-HPr then transfers it to the PTS EIIA domain. In terms of biological role, P-Ser-HPr interacts with the catabolite control protein A (CcpA), forming a complex that binds to DNA at the catabolite response elements cre, operator sites preceding a large number of catabolite-regulated genes. Thus, P-Ser-HPr is a corepressor in carbon catabolite repression (CCR), a mechanism that allows bacteria to coordinate and optimize the utilization of available carbon sources. P-Ser-HPr mediates glucose catabolite repression of cry4A toxin expression. This chain is Phosphocarrier protein HPr (ptsH), found in Bacillus thuringiensis subsp. israelensis.